The following is a 462-amino-acid chain: MRNPLGLRFSTGHALLASALAPPCIIAFLETRYWWAGIALASLGVIVATVTFYGRRITGWVAAVYAWLRRRRRPPDSSSEPVVGATVKPGDHVAVRWQGEFLVAVIELIPRPFTPTVIVDGQAHTDDMLDTGLVEELLSVHCPDLEADIVSAGYRVGNTAAPDVVSLYQQVIGTDPAPANRRTWIVLRADPERTRKSAQRRDEGVAGLARYLVASATRIADRLASHGVDAVCGRSFDDYDHATDIGFVREKWSMIKGRDAYTAAYAAPGGPDVWWSARADHTITRVRVAPGMAPQSTVLLTTADKPKTPRGFARLFGGQRPALQGQHLVANRHCQLPIGSAGVLVGETVNRCPVYMPFDDVDIALNLGDAQTFTQFVVRAAAAGAMVTVGPQFEEFARLIGAHIGQEVKVAWPNATTYLGPHPGIDRVILRHNVIGTPRHRQLPIRRVSPPEESRYQMALPK.

A run of 2 helical transmembrane segments spans residues 9–29 (FSTG…IAFL) and 34–54 (WWAG…TFYG).

It belongs to the EccE family. In terms of assembly, part of the ESX-1 / type VII secretion system (T7SS), which is composed of cytosolic and membrane components. The ESX-1 membrane complex is composed of EccB1, EccCa1, EccCb1, EccD1 and EccE1.

The protein resides in the cell inner membrane. In terms of biological role, part of the ESX-1 specialized secretion system, which delivers several virulence factors to host cells during infection, including the key virulence factors EsxA (ESAT-6) and EsxB (CFP-10). This is ESX-1 secretion system protein EccE1 from Mycobacterium tuberculosis (strain CDC 1551 / Oshkosh).